The primary structure comprises 351 residues: tRNA pseudouridine synthase D (351 aa).

The Nucleophile role is filled by Asp81. The TRUD domain occupies 158-304 (GVPNYFGSQR…MRHERRAIEL (147 aa)).

This sequence belongs to the pseudouridine synthase TruD family.

It carries out the reaction uridine(13) in tRNA = pseudouridine(13) in tRNA. Functionally, responsible for synthesis of pseudouridine from uracil-13 in transfer RNAs. This Aliivibrio fischeri (strain ATCC 700601 / ES114) (Vibrio fischeri) protein is tRNA pseudouridine synthase D.